Consider the following 190-residue polypeptide: Adenine phosphoribosyltransferase (190 aa).

It belongs to the purine/pyrimidine phosphoribosyltransferase family. In terms of assembly, homodimer.

The protein localises to the cytoplasm. It catalyses the reaction AMP + diphosphate = 5-phospho-alpha-D-ribose 1-diphosphate + adenine. Its pathway is purine metabolism; AMP biosynthesis via salvage pathway; AMP from adenine: step 1/1. Catalyzes a salvage reaction resulting in the formation of AMP, that is energically less costly than de novo synthesis. This is Adenine phosphoribosyltransferase from Treponema pallidum (strain Nichols).